The primary structure comprises 339 residues: Large ribosomal subunit protein uL10 (339 aa).

The disordered stretch occupies residues Thr-305–Gly-339. Positions Lys-312–Ala-330 are enriched in acidic residues.

This sequence belongs to the universal ribosomal protein uL10 family. In terms of assembly, part of the 50S ribosomal subunit. Forms part of the ribosomal stalk which helps the ribosome interact with GTP-bound translation factors. Forms a heptameric L10(L12)2(L12)2(L12)2 complex, where L10 forms an elongated spine to which the L12 dimers bind in a sequential fashion.

Functionally, forms part of the ribosomal stalk, playing a central role in the interaction of the ribosome with GTP-bound translation factors. This chain is Large ribosomal subunit protein uL10, found in Thermococcus onnurineus (strain NA1).